The primary structure comprises 323 residues: MEKNDKEKRELTIEDLPGVGDATAEKLRESGYDDIMTIAVASPKDLAEISGIAEGAAIKIINAARKYADVGNFETGEEILNKRKEIKKLTTGSSNLDNLLGGGLETQSITEFFGEFGSGKTQIMHQLAVNATMPVEKNGFDSDVLIIDTENTFRPERIIQMARAKDLDPDQTLERIHVARAYNSHHQILLAEKAADMAREYKIRLLIVDSLTSHFRSEYVGRGSLAERQQLLNRHMHDLLKFGTIYNAVIAVTNQVSANPAVFFGDPMNPIGGNIVGHTATFRIYLRKAKAGKRIARLIDSPYLPEGETVITITESGITDGEK.

Residue 114 to 121 (GEFGSGKT) participates in ATP binding.

This sequence belongs to the eukaryotic RecA-like protein family.

Its function is as follows. Involved in DNA repair and in homologous recombination. Binds and assemble on single-stranded DNA to form a nucleoprotein filament. Hydrolyzes ATP in a ssDNA-dependent manner and promotes DNA strand exchange between homologous DNA molecules. The polypeptide is DNA repair and recombination protein RadA (Picrophilus torridus (strain ATCC 700027 / DSM 9790 / JCM 10055 / NBRC 100828 / KAW 2/3)).